A 206-amino-acid polypeptide reads, in one-letter code: Tumor protein D54 (206 aa).

Residue Met1 is modified to N-acetylmethionine. Over residues 1–14 (MDSAGQDINLNSPN) the composition is skewed to polar residues. Positions 1-24 (MDSAGQDINLNSPNKGLLSDSMTD) are disordered. Phosphoserine occurs at positions 3, 12, 19, and 21. Residues 38–82 (VEGLTEAEEEELRAELTKVEEEIVTLRQVLAAKERHCGELKRRLG) are a coiled coil. Phosphoserine is present on residues Ser96, Ser149, and Ser161. Phosphothreonine is present on Thr163. Position 166 is a phosphoserine (Ser166). A Phosphothreonine modification is found at Thr173. Basic and acidic residues predominate over residues 175–185 (KSKVVGDRENG). The disordered stretch occupies residues 175-206 (KSKVVGDRENGSDNLPSSAGSGDKPLSDPAPF). Ser192 and Ser195 each carry phosphoserine.

The protein belongs to the TPD52 family. Forms a homodimer or heterodimer with other members of the family. Interacts with MAL2.

The protein is Tumor protein D54 (TPD52L2) of Homo sapiens (Human).